The primary structure comprises 138 residues: MLRTMMTAKIHRATVTHADLHYVGSVTVDRDLLDAADILVGERVSIVDVTNGARLDTYTIAGERGSGVLGINGAAAHLVDVGDVVILIAYGQMTTEEARALEPRVVHVDVGNRIRAVDADPTAPPAPGLERSPLAEPV.

The Schiff-base intermediate with substrate; via pyruvic acid role is filled by S25. Pyruvic acid (Ser) is present on S25. T57 provides a ligand contact to substrate. Catalysis depends on Y58, which acts as the Proton donor. Residue 73-75 (GAA) coordinates substrate. Residues 117 to 138 (VDADPTAPPAPGLERSPLAEPV) are disordered.

The protein belongs to the PanD family. In terms of assembly, heterooctamer of four alpha and four beta subunits. Pyruvate serves as cofactor. In terms of processing, is synthesized initially as an inactive proenzyme, which is activated by self-cleavage at a specific serine bond to produce a beta-subunit with a hydroxyl group at its C-terminus and an alpha-subunit with a pyruvoyl group at its N-terminus.

Its subcellular location is the cytoplasm. The catalysed reaction is L-aspartate + H(+) = beta-alanine + CO2. The protein operates within cofactor biosynthesis; (R)-pantothenate biosynthesis; beta-alanine from L-aspartate: step 1/1. Its function is as follows. Catalyzes the pyruvoyl-dependent decarboxylation of aspartate to produce beta-alanine. This Clavibacter michiganensis subsp. michiganensis (strain NCPPB 382) protein is Aspartate 1-decarboxylase.